We begin with the raw amino-acid sequence, 439 residues long: Chaperone SurA (439 aa).

The first 27 residues, 1–27 (MRRISSRLSLVLFAALSCATALFPAHA), serve as a signal peptide directing secretion. PpiC domains lie at 180-281 (GEEF…KLLD) and 293-391 (LEQT…QVEA).

Its subcellular location is the periplasm. The catalysed reaction is [protein]-peptidylproline (omega=180) = [protein]-peptidylproline (omega=0). Chaperone involved in the correct folding and assembly of outer membrane proteins. Recognizes specific patterns of aromatic residues and the orientation of their side chains, which are found more frequently in integral outer membrane proteins. May act in both early periplasmic and late outer membrane-associated steps of protein maturation. The sequence is that of Chaperone SurA from Aromatoleum aromaticum (strain DSM 19018 / LMG 30748 / EbN1) (Azoarcus sp. (strain EbN1)).